The sequence spans 359 residues: UDP-3-O-acylglucosamine N-acyltransferase (359 aa).

The active-site Proton acceptor is histidine 253.

The protein belongs to the transferase hexapeptide repeat family. LpxD subfamily. Homotrimer.

It catalyses the reaction a UDP-3-O-[(3R)-3-hydroxyacyl]-alpha-D-glucosamine + a (3R)-hydroxyacyl-[ACP] = a UDP-2-N,3-O-bis[(3R)-3-hydroxyacyl]-alpha-D-glucosamine + holo-[ACP] + H(+). It participates in bacterial outer membrane biogenesis; LPS lipid A biosynthesis. Its function is as follows. Catalyzes the N-acylation of UDP-3-O-acylglucosamine using 3-hydroxyacyl-ACP as the acyl donor. Is involved in the biosynthesis of lipid A, a phosphorylated glycolipid that anchors the lipopolysaccharide to the outer membrane of the cell. In Burkholderia cenocepacia (strain ATCC BAA-245 / DSM 16553 / LMG 16656 / NCTC 13227 / J2315 / CF5610) (Burkholderia cepacia (strain J2315)), this protein is UDP-3-O-acylglucosamine N-acyltransferase.